The chain runs to 91 residues: Acylphosphatase (91 aa).

One can recognise an Acylphosphatase-like domain in the interval 5–91 (CLHAYVGGRV…QGIAGFVVRR (87 aa)). Residues arginine 20 and asparagine 38 contribute to the active site.

It belongs to the acylphosphatase family.

It catalyses the reaction an acyl phosphate + H2O = a carboxylate + phosphate + H(+). In Pseudomonas aeruginosa (strain ATCC 15692 / DSM 22644 / CIP 104116 / JCM 14847 / LMG 12228 / 1C / PRS 101 / PAO1), this protein is Acylphosphatase (acyP).